Here is a 147-residue protein sequence, read N- to C-terminus: Methylmalonyl-CoA mutase homolog (147 aa).

To methylmalonyl-CoA mutase.

This is Methylmalonyl-CoA mutase homolog from Alkalihalophilus pseudofirmus (strain ATCC BAA-2126 / JCM 17055 / OF4) (Bacillus pseudofirmus).